The chain runs to 85 residues: Conotoxin Vx15a (85 aa).

The signal sequence occupies residues 1 to 23 (MEKLTVLILVATVLLTIQVLAQS). Residues 24–49 (DGDKHLMKRSKQYATKRLSALMRGHR) constitute a propeptide that is removed on maturation. Gln-50 carries the post-translational modification Pyrrolidone carboxylic acid.

This sequence belongs to the conotoxin O2 superfamily. In terms of processing, contains 4 disulfide bonds. Expressed by the venom duct.

The protein localises to the secreted. In Conus vexillum (Flag cone), this protein is Conotoxin Vx15a.